A 212-amino-acid chain; its full sequence is Nucleoside triphosphate pyrophosphatase (212 aa).

Catalysis depends on D79, which acts as the Proton acceptor.

This sequence belongs to the Maf family. Requires a divalent metal cation as cofactor.

It is found in the cytoplasm. The enzyme catalyses a ribonucleoside 5'-triphosphate + H2O = a ribonucleoside 5'-phosphate + diphosphate + H(+). The catalysed reaction is a 2'-deoxyribonucleoside 5'-triphosphate + H2O = a 2'-deoxyribonucleoside 5'-phosphate + diphosphate + H(+). Its function is as follows. Nucleoside triphosphate pyrophosphatase. May have a dual role in cell division arrest and in preventing the incorporation of modified nucleotides into cellular nucleic acids. The polypeptide is Nucleoside triphosphate pyrophosphatase (Nocardia farcinica (strain IFM 10152)).